A 65-amino-acid chain; its full sequence is Small ribosomal subunit protein bS21 (65 aa).

This sequence belongs to the bacterial ribosomal protein bS21 family.

This chain is Small ribosomal subunit protein bS21, found in Aster yellows phytoplasma.